Consider the following 699-residue polypeptide: Long-chain-fatty-acid--CoA ligase 1 (699 aa).

Met1 carries the post-translational modification N-acetylmethionine. Tyr9 bears the 3'-nitrotyrosine mark. The helical; Signal-anchor for type III membrane protein transmembrane segment at 25–45 (LPTNTLMGFGAFAALTTFWYA) threads the bilayer. The Cytoplasmic segment spans residues 46-699 (TRPKALKPPC…IDELYSTIKI (654 aa)). Tyr85 bears the Phosphotyrosine mark. Position 86 is a 3'-nitrotyrosine (Tyr86). O-linked (GlcNAc) serine glycosylation occurs at Ser136. N6-acetyllysine is present on residues Lys208, Lys357, and Lys387. Phosphoserine is present on Ser621. Residue Lys633 is modified to N6-acetyllysine.

The protein belongs to the ATP-dependent AMP-binding enzyme family. Mg(2+) serves as cofactor. Liver, heart, epididymal adipose and to a lesser extent brain, small intestine and lung.

Its subcellular location is the mitochondrion outer membrane. It is found in the peroxisome membrane. It localises to the microsome membrane. The protein resides in the endoplasmic reticulum membrane. The catalysed reaction is a long-chain fatty acid + ATP + CoA = a long-chain fatty acyl-CoA + AMP + diphosphate. It catalyses the reaction (5Z,8Z,11Z,14Z)-eicosatetraenoate + ATP + CoA = (5Z,8Z,11Z,14Z)-eicosatetraenoyl-CoA + AMP + diphosphate. It carries out the reaction 3,7,11,15-tetramethylhexadecanoate + ATP + CoA = phytanoyl-CoA + AMP + diphosphate. The enzyme catalyses hexadecanoate + ATP + CoA = hexadecanoyl-CoA + AMP + diphosphate. The catalysed reaction is (E)-hexadec-2-enoate + ATP + CoA = (2E)-hexadecenoyl-CoA + AMP + diphosphate. It catalyses the reaction 2,6,10,14-tetramethylpentadecanoate + ATP + CoA = pristanoyl-CoA + AMP + diphosphate. It carries out the reaction 14,15-epoxy-(5Z,8Z,11Z)-eicosatrienoate + ATP + CoA = 14,15-epoxy-(5Z,8Z,11Z)-eicosatrienoyl-CoA + AMP + diphosphate. The enzyme catalyses 5-hydroxy-(6E,8Z,11Z,14Z)-eicosatetraenoate + ATP + CoA = 5-hydroxy-(6E,8Z,11Z,14Z)-eicosatetraenoyl-CoA + AMP + diphosphate. The catalysed reaction is 12-hydroxy-(5Z,8Z,10E,14Z)-eicosatetraenoate + ATP + CoA = 12-hydroxy-(5Z,8Z,10E,14Z)-eicosatetraenoyl-CoA + AMP + diphosphate. It catalyses the reaction 15-hydroxy-(5Z,8Z,11Z,13E)-eicosatetraenoate + ATP + CoA = 15-hydroxy-(5Z,8Z,11Z,13E)-eicosatetraenoyl-CoA + AMP + diphosphate. It carries out the reaction (9Z)-octadecenoate + ATP + CoA = (9Z)-octadecenoyl-CoA + AMP + diphosphate. Inhibited at high temperature and by arachidonate. In terms of biological role, catalyzes the conversion of long-chain fatty acids to their active form acyl-CoAs for both synthesis of cellular lipids, and degradation via beta-oxidation. Preferentially uses palmitoleate, oleate and linoleate. Preferentially activates arachidonate than epoxyeicosatrienoic acids (EETs) or hydroxyeicosatrienoic acids (HETEs). The chain is Long-chain-fatty-acid--CoA ligase 1 from Rattus norvegicus (Rat).